The primary structure comprises 63 residues: Protein DsrB (63 aa).

It belongs to the DsrB family.

This Yersinia pseudotuberculosis serotype O:1b (strain IP 31758) protein is Protein DsrB.